The following is a 548-amino-acid chain: BTB/POZ domain-containing protein At5g17580 (548 aa).

A BTB domain is found at 7–74; that stretch reads SDLHINVKGV…CNGSEFKFTS (68 aa). The 263-residue stretch at 180 to 442 folds into the NPH3 domain; it reads DWKSEDLITI…VNVLCVSQLQ (263 aa). At tyrosine 383 the chain carries Phosphotyrosine. Positions 442 to 493 form a coiled coil; the sequence is QIRDTVAKEIKGMEEKVDEEEEEEIEVSSDEDEMEKMSNKLLGLEIENDECV.

This sequence belongs to the NPH3 family.

Its pathway is protein modification; protein ubiquitination. Its function is as follows. May act as a substrate-specific adapter of an E3 ubiquitin-protein ligase complex (CUL3-RBX1-BTB) which mediates the ubiquitination and subsequent proteasomal degradation of target proteins. The chain is BTB/POZ domain-containing protein At5g17580 from Arabidopsis thaliana (Mouse-ear cress).